The primary structure comprises 274 residues: Thiamine kinase (274 aa).

The protein belongs to the thiamine kinase family.

The enzyme catalyses thiamine + ATP = thiamine phosphate + ADP + H(+). It participates in cofactor biosynthesis; thiamine diphosphate biosynthesis; thiamine phosphate from thiamine: step 1/1. Catalyzes the ATP-dependent phosphorylation of thiamine to thiamine phosphate. Is involved in thiamine salvage. This chain is Thiamine kinase, found in Salmonella gallinarum (strain 287/91 / NCTC 13346).